An 824-amino-acid chain; its full sequence is DNA replication helicase (824 aa).

ATP is bound at residue 90-97; sequence GTAGAGKT.

The protein belongs to the herpesviridae helicase family. As to quaternary structure, associates with the primase and the primase-associated factor to form the helicase-primase complex.

It localises to the host nucleus. Its function is as follows. Component of the helicase/primase complex. Unwinds the DNA at the replication forks and generates single-stranded DNA for both leading and lagging strand synthesis. The primase synthesizes short RNA primers on the lagging strand that the polymerase elongates using dNTPs. Possesses helicase-like motifs and therefore may act as the helicase subunit of the complex. The polypeptide is DNA replication helicase (Human herpesvirus 6B (strain Z29) (HHV-6 variant B)).